The sequence spans 539 residues: Chaperone Ric-8A (539 aa).

The tract at residues 507 to 539 (MGITPSGNLAPMENAIRDMADERSSSDSDLGLD) is disordered. A compositionally biased stretch (basic and acidic residues) spans 521 to 532 (AIRDMADERSSS).

It belongs to the synembryn family.

It is found in the cytoplasm. Its subcellular location is the cell cortex. Chaperone that specifically binds and folds nascent G alpha proteins prior to G protein heterotrimer formation, promoting their stability and activity: folds GNAI1, GNAO1, GNA13 and GNAQ. Does not fold G(s) G-alpha proteins GNAS nor GNAL. Also acts as a guanine nucleotide exchange factor (GEF) for G alpha proteins by stimulating exchange of bound GDP for free GTP. The polypeptide is Chaperone Ric-8A (RIC8A) (Gallus gallus (Chicken)).